The primary structure comprises 759 residues: Forkhead box protein M1 (759 aa).

Positions 1–92 (MRTSPRRPLI…MRLPSNPPQS (92 aa)) are disordered. Residues 48-63 (LAHELEDMAPKSKADQ) show a composition bias toward basic and acidic residues. A DNA-binding region (fork-head) is located at residues 260-358 (RPPYSYMALI…KTASPMSPAD (99 aa)). Disordered stretches follow at residues 420–450 (AESS…KHLG), 516–535 (SANP…PSNV), and 596–631 (KEHF…RDPV). Positions 601-612 (KPTTSSTPSKPT) are enriched in low complexity.

As to expression, localized to the animal hemisphere of early cleavage stage embryos. During neurulation, expressed in the neural folds. Later, expressed in the spinal cord and in the eye field. During tailbud stages, expression is still restricted to the neuroectoderm, predominantly to the hindbrain, the eye and the spinal cord. With ongoing development, expression is also found at lower levels in the branchial arches. At stage 35, expressed in the rhombencephalon and in the eye retina.

It localises to the nucleus. Transcription factor regulating the expression of cell cycle genes essential for DNA replication and mitosis. Plays a role in the control of cell proliferation. Also plays a role in DNA break repair, participating in the DNA damage checkpoint response. Promotes transcription of PHB2. The chain is Forkhead box protein M1 from Xenopus laevis (African clawed frog).